Consider the following 2431-residue polypeptide: Histone-lysine N-methyltransferase trr (2431 aa).

4 disordered regions span residues 34–78, 135–201, 213–235, and 759–789; these read LQKR…STAP, DADK…ENSG, ASGADSSTSVGNSTGTGTPAGTP, and QSANQIQMATSTSTASNPSTPNPTVNATPMN. Residues 142–165 are compositionally biased toward polar residues; sequence YRISTPRNSQSNPLLHRNTAFTSF. Composition is skewed to low complexity over residues 171–183, 218–235, and 767–787; these read ASSSASSSSSTAS, SSTSVGNSTGTGTPAGTP, and ATSTSTASNPSTPNPTVNATP. Residues 801-805 carry the LXXLL motif 1 motif; sequence LKQLL. Disordered regions lie at residues 863-895, 918-973, 1226-1292, 1404-1433, and 1478-1500; these read PVPTATQAAGSSSSSGSVATSTTTTTVASGGSS, VGGE…QVKQ, HPQQ…AGGA, TSGGGSPASMSSAASAGSSSAGGGKLKGGS, and GLVGGSARTRSPSPAESPGAEKM. Composition is skewed to low complexity over residues 866-895, 952-970, and 1226-1241; these read TATQAAGSSSSSGSVATSTTTTTVASGGSS, QQQQQQLHQPQQLQPSPHQ, and HPQQQQQQLHQNQPQN. Basic residues predominate over residues 1269-1281; it reads RKRRKREVQKPRR. Over residues 1410–1422 the composition is skewed to low complexity; the sequence is PASMSSAASAGSS. The segment covering 1423–1433 has biased composition (gly residues); it reads SAGGGKLKGGS. Position 1486 is a phosphothreonine (threonine 1486). 2 positions are modified to phosphoserine: serine 1488 and serine 1490. Positions 1652-1656 match the LXXLL motif 2 motif; sequence LANLL. The segment at 1790–1836 is disordered; the sequence is GGSAVKSSNGDSPGSFCASSTAPAEMVVKQEPEDEDEKTPSVPGNPT. Over residues 1794-1811 the composition is skewed to polar residues; sequence VKSSNGDSPGSFCASSTA. The C2HC pre-PHD-type zinc finger occupies 1895–1935; sequence TRQCVFCNQRGDGQADGPSRLLNFDVDKWVHLNCALWSNGV. The PHD-type zinc finger occupies 1956–2003; it reads QACSACHQPGATIKCFKSRCNSLYHLPCAIREECVFYKNKSVHCSVHG. An LXXLL motif 3 motif is present at residues 2060–2064; it reads LSNLL. Positions 2061-2121 constitute an FYR N-terminal domain; sequence SNLLRVGNMT…CRYICSIAEA (61 aa). One can recognise an FYR C-terminal domain in the interval 2122-2209; it reads GCKPEFRIQV…ETLTDYRFKY (88 aa). Positions 2291–2407 constitute an SET domain; the sequence is NNVYLARSKI…RGEELSYDYK (117 aa). One can recognise a Post-SET domain in the interval 2415 to 2431; the sequence is HKIPCACGAPNCRKWMN.

It belongs to the class V-like SAM-binding methyltransferase superfamily. Histone-lysine methyltransferase family. TRX/MLL subfamily. Component of the MLL3/4 complex composed at least of the catalytic subunit trr, ash2, Rbbp5, Dpy-30L1, wds, hcf, ptip, Pa1, Utx, Lpt and Ncoa6. Interacts with nuclear receptor EcR in an ecdysone-dependent manner. Interacts with ash2; the interaction stabilizes trr. Widely expressed.

It localises to the nucleus. Its subcellular location is the chromosome. It carries out the reaction L-lysyl(4)-[histone H3] + 3 S-adenosyl-L-methionine = N(6),N(6),N(6)-trimethyl-L-lysyl(4)-[histone H3] + 3 S-adenosyl-L-homocysteine + 3 H(+). Histone methyltransferase that acts as a coactivator for the ecdysone receptor during development. Specifically trimethylates 'Lys-4' of histone H3, a specific tag for epigenetic transcriptional activation. Recruited by EcR in an ecdysone-dependent manner causing H3 'Lys-4' trimethylation at ecdysone-inducible promoters, leading to activate expression. Plays a central role in the developing compound eye, during the progression of the morphogenetic furrow and in post-furrow differentiation of the retinal epithelium, notably by activating expression of hh. Also required for wing and abdominal development. This Drosophila melanogaster (Fruit fly) protein is Histone-lysine N-methyltransferase trr (trr).